A 513-amino-acid polypeptide reads, in one-letter code: Probable lipid II flippase MurJ (513 aa).

The next 15 membrane-spanning stretches (helical) occupy residues 3–23 (ILKS…LGFM), 25–45 (DLLI…FLAF), 83–103 (FISN…AFGI), 133–153 (IMFP…ILNA), 162–182 (YSSI…TAYF), 186–206 (ILSL…YQFP), 221–241 (ILNL…LGMS), 245–265 (VSII…ISWI), 271–291 (LVEF…LPLL), 313–333 (LVCI…ESLI), 354–374 (IEFY…LAGF), 382–402 (TPMK…IFFI), 405–425 (FQYT…FFLL), 441–461 (WLRF…LLFI), and 481–501 (LFYI…CLGL).

Belongs to the MurJ/MviN family.

The protein resides in the cell inner membrane. The protein operates within cell wall biogenesis; peptidoglycan biosynthesis. Functionally, involved in peptidoglycan biosynthesis. Transports lipid-linked peptidoglycan precursors from the inner to the outer leaflet of the cytoplasmic membrane. In Buchnera aphidicola subsp. Baizongia pistaciae (strain Bp), this protein is Probable lipid II flippase MurJ.